The primary structure comprises 384 residues: S-adenosylmethionine synthase (384 aa).

Residue H15 participates in ATP binding. D17 contributes to the Mg(2+) binding site. E43 is a K(+) binding site. L-methionine-binding residues include E56 and Q99. A flexible loop region spans residues 99–109; it reads QSSDINQGVDR. ATP contacts are provided by residues 164–166, 230–231, D239, 245–246, A262, and K266; these read DAK, RF, and RK. D239 contributes to the L-methionine binding site. K270 is a binding site for L-methionine.

The protein belongs to the AdoMet synthase family. As to quaternary structure, homotetramer; dimer of dimers. Requires Mg(2+) as cofactor. The cofactor is K(+).

The protein resides in the cytoplasm. It carries out the reaction L-methionine + ATP + H2O = S-adenosyl-L-methionine + phosphate + diphosphate. Its pathway is amino-acid biosynthesis; S-adenosyl-L-methionine biosynthesis; S-adenosyl-L-methionine from L-methionine: step 1/1. Functionally, catalyzes the formation of S-adenosylmethionine (AdoMet) from methionine and ATP. The overall synthetic reaction is composed of two sequential steps, AdoMet formation and the subsequent tripolyphosphate hydrolysis which occurs prior to release of AdoMet from the enzyme. The polypeptide is S-adenosylmethionine synthase (Histophilus somni (strain 129Pt) (Haemophilus somnus)).